The primary structure comprises 1092 residues: DNA polymerase delta catalytic subunit (1092 aa).

Residues 1 to 71 (MDGKRKFNGT…SRPPPPELDP (71 aa)) form a disordered region. A Nuclear localization signal motif is present at residues 4 to 19 (KRKFNGTSNGHAKKPR). Zn(2+) contacts are provided by Cys-997, Cys-1000, Cys-1014, and Cys-1017. The CysA-type zinc-finger motif lies at 997–1017 (CLGCKSLMPKGYEQACLCPHC). Cys-1046, Cys-1049, Cys-1059, and Cys-1064 together coordinate [4Fe-4S] cluster. The CysB motif motif lies at 1046-1064 (CQRCQESLHEEVICSNRDC).

The protein belongs to the DNA polymerase type-B family. In terms of assembly, catalytic component of the DNA polymerase delta complex consisting of three subunits: the catalytic subunit PolD1 and two accessory subunits PolD2/Pol31 and PolD3/Pol32. Within the delta complex, interacts with both PolD2 and PolD3, and is able to interact with PolD2 in the absence of PolD3. Interacts with PCNA and PCNA2. [4Fe-4S] cluster is required as a cofactor. Mg(2+) serves as cofactor. In terms of tissue distribution, expressed in ovaries (at the protein level). Expressed in embryos (at the protein level).

The protein resides in the nucleus. The protein localises to the nucleoplasm. The catalysed reaction is DNA(n) + a 2'-deoxyribonucleoside 5'-triphosphate = DNA(n+1) + diphosphate. Its activity is regulated as follows. Inhibited by KCL. Also inhibited by carbonyldiphosphonate, aphidicolin and N-ethylmaleimide (NEM). In terms of biological role, as the catalytic component of the DNA polymerase delta complex, plays a crucial role in high fidelity genome replication, including lagging strand synthesis, DNA recombination and repair. Exhibits both DNA polymerase and 3'- to 5'-exonuclease activities. Required at the nucleus of rapidly dividing embryonic cells to activate genome replication during the earliest cell cycles. Likely to require the presence of accessory proteins PolD2 and PolD3 for full activity. This is DNA polymerase delta catalytic subunit from Drosophila melanogaster (Fruit fly).